We begin with the raw amino-acid sequence, 287 residues long: Polyamine aminopropyltransferase (287 aa).

The region spanning 5-238 (EIWYETLHAN…GIMTFAWASN (234 aa)) is the PABS domain. S-methyl-5'-thioadenosine is bound at residue glutamine 33. Residues histidine 64 and aspartate 88 each contribute to the spermidine site. Residues glutamate 108 and 140–141 (DG) contribute to the S-methyl-5'-thioadenosine site. Aspartate 158 (proton acceptor) is an active-site residue. 158-161 (DCTD) provides a ligand contact to spermidine. An S-methyl-5'-thioadenosine-binding site is contributed by proline 165.

The protein belongs to the spermidine/spermine synthase family. As to quaternary structure, homodimer or homotetramer.

Its subcellular location is the cytoplasm. The catalysed reaction is S-adenosyl 3-(methylsulfanyl)propylamine + putrescine = S-methyl-5'-thioadenosine + spermidine + H(+). The protein operates within amine and polyamine biosynthesis; spermidine biosynthesis; spermidine from putrescine: step 1/1. Functionally, catalyzes the irreversible transfer of a propylamine group from the amino donor S-adenosylmethioninamine (decarboxy-AdoMet) to putrescine (1,4-diaminobutane) to yield spermidine. The sequence is that of Polyamine aminopropyltransferase from Pectobacterium carotovorum subsp. carotovorum (strain PC1).